We begin with the raw amino-acid sequence, 57 residues long: Phosphatase RapH inhibitor (57 aa).

2 consecutive propeptides follow at residues 1-34 and 41-57; these read MPIK…FKES and YIDH…KALS. The disordered stretch occupies residues 26-57; that stretch reads TNSGGFKESTDRNTTYIDHSPYKLSDQKKALS.

The protein belongs to the Phr family. Post-translationally, contains a predicted signal peptide cleavage site in the N-terminal region, however the propeptide is probably only subject to processing events at the ends of the mature peptide.

The protein resides in the secreted. Its subcellular location is the cytoplasm. In terms of biological role, signaling molecule involved the regulation of both sporulation and competence. Secreted during production, but the mature peptide acts intracellularly, indicating that it needs to be imported into the cell to function. Acts by inhibiting RapH activity. Can inhibit both RapH activities, the dephosphorylation of Spo0F and the sequestration of ComA. This is Phosphatase RapH inhibitor (phrH) from Bacillus subtilis (strain 168).